Reading from the N-terminus, the 394-residue chain is 8-amino-7-oxononanoate synthase (394 aa).

R21 serves as a coordination point for substrate. 112-113 is a pyridoxal 5'-phosphate binding site; that stretch reads GY. Residue H137 participates in substrate binding. 3 residues coordinate pyridoxal 5'-phosphate: S183, H211, and T239. N6-(pyridoxal phosphate)lysine is present on K242. Residue T358 participates in substrate binding.

It belongs to the class-II pyridoxal-phosphate-dependent aminotransferase family. BioF subfamily. As to quaternary structure, homodimer. The cofactor is pyridoxal 5'-phosphate.

It catalyses the reaction 6-carboxyhexanoyl-[ACP] + L-alanine + H(+) = (8S)-8-amino-7-oxononanoate + holo-[ACP] + CO2. Its pathway is cofactor biosynthesis; biotin biosynthesis. Its function is as follows. Catalyzes the decarboxylative condensation of pimeloyl-[acyl-carrier protein] and L-alanine to produce 8-amino-7-oxononanoate (AON), [acyl-carrier protein], and carbon dioxide. The protein is 8-amino-7-oxononanoate synthase of Paraburkholderia phymatum (strain DSM 17167 / CIP 108236 / LMG 21445 / STM815) (Burkholderia phymatum).